The sequence spans 1185 residues: MCEVMPTINEGDRLGPPHGADADANFEQLMVNMLDEREKLLESLRESQETLAATQSRLQDAIHERDQLQRHLNSALPQEFATLTRELSMCREQLLEREEEISELKAERNNTRLLLEHLECLVSRHERSLRMTVVKRQAQSPSGVSSEVEVLKALKSLFEHHKALDEKVRERLRAALERVTTLEEQLAGAHQQVSALQQGAGVRDGAAEEEGTVELGPKRLWKEDTGRVEELQELLEKQNFELSQARERLVTLTTTVTELEEDLGTARRDLIKSEELSSKHQRDLREALAQKEDMEERITTLEKRYLAAQREATSIHDLNDKLENELANKESLHRQCEEKARHLQELLEVAEQKLQQTMRKAETLPEVEAELAQRIAALTKAEERHGNIEEHLRQLEGQLEEKNQELARTAVQVRQREKMNEDHNKRLSDTVDRLLSESNERLQLHLKERMAALEEKNTLIQELESSQRQIEEQHHHKGRLSEEIEKLRQEVDQLKGRGGPFVDGVHSRSHMGSAADVRFSLGTTTHAPPGVHRRYSALREESAKLALPLTVTLRSPTWMRMSQGVCCNLEYHSSGTLCGSSGPLPVPEMIQEEKESTELRAEEIETRVTSGSMEALNLKQLRKRGSIPTSLTALSLASASPPLSGRSTPKLTSRSAAQDLDRMGVMTLPSDLRKHRRKLLSPVSREENREDKATIKCETSPPSSPRTLRLEKLGHPALSQEEGKSALEDQGSNPSSSNSSQDSLHKGAKRKGIKSSIGRLFGKKEKGRLIQLSRDGATGHVLLTDSEFSMQEPMVPAKLGTQAEKDRRLKKKHQLLEDARRKGMPFAQWDGPTVVSWLELWVGMPAWYVAACRANVKSGAIMSALSDTEIQREIGISNALHRLKLRLAIQEMVSLTSPSAPPTSRTSSGNVWVTHEEMETLETSTKTDSEEGSWAQTLAYGDMNHEWIGNEWLPSLGLPQYRSYFMECLVDARMLDHLTKKDLRVHLKMVDSFHRTSLQYGIMCLKRLNYDRKELEKRREESQHEIKDVLVWTNDQVVHWVQSIGLRDYAGNLHESGVHGALLALDENFDHNTLALILQIPTQNTQARQVMEREFNNLLALGTDRKLDDGDDKVFRRAPSWRKRFRPREHHGRGGMLSASAETLPAGFRVSTLGTLQPPPAPPKKIMPEAHSHYLYGHMLSAFRD.

Coiled coils occupy residues 24 to 123 (ANFE…CLVS) and 165 to 499 (DEKV…GRGG). 2 disordered regions span residues 638–709 (SASP…RTLR) and 721–757 (EEGK…KSSI). S640 bears the Phosphoserine mark. The span at 645–656 (GRSTPKLTSRSA) shows a compositional bias: polar residues. S681 is modified (phosphoserine). A compositionally biased stretch (basic and acidic residues) spans 684–695 (SREENREDKATI). Low complexity predominate over residues 729–742 (DQGSNPSSSNSSQD). 3 consecutive SAM domains span residues 829–895 (WDGP…MVSL), 944–1008 (NHEW…LKRL), and 1032–1101 (WTND…LLAL).

It belongs to the liprin family. Liprin-alpha subfamily. In terms of assembly, forms homodimers and heterodimers with liprins-alpha and liprins-beta. Interacts with the second PTPase domain of PTPRD, PTPRF and PTPRS. Interacts with RIMS1 and RIMS2. Interacts with GIT1 and GIT2. Interacts with GRIP1. Interacts with KIF1A. As to expression, expressed only in the heart, brain, and skeletal muscle.

The protein localises to the cytoplasm. The protein resides in the cell surface. Its function is as follows. May regulate the disassembly of focal adhesions. May localize receptor-like tyrosine phosphatases type 2A at specific sites on the plasma membrane, possibly regulating their interaction with the extracellular environment and their association with substrates. In Homo sapiens (Human), this protein is Liprin-alpha-4 (PPFIA4).